Reading from the N-terminus, the 966-residue chain is Catenin alpha-2 (966 aa).

Residues Pro924–Thr940 show a composition bias toward basic and acidic residues. A disordered region spans residues Pro924 to Ser952. Over residues Arg941–Ile951 the composition is skewed to basic residues.

Belongs to the vinculin/alpha-catenin family.

The protein localises to the cell membrane. It localises to the cytoplasm. The protein resides in the cytoskeleton. Its subcellular location is the cell junction. It is found in the adherens junction. The protein localises to the cell projection. It localises to the axon. The protein resides in the nucleus. In terms of biological role, may function as a linker between cadherin adhesion receptors and the cytoskeleton to regulate cell-cell adhesion and differentiation in the nervous system. In Xenopus tropicalis (Western clawed frog), this protein is Catenin alpha-2 (ctnna2).